The primary structure comprises 1613 residues: Reverse gyrase (1613 aa).

The RG N-terminal-type zinc-finger motif lies at 1-38 (MIPMIYKEMCPNCNGEITSERLAIGVCEKCLKEENVFE). C10, C13, C27, and C30 together coordinate Zn(2+). ATP is bound by residues Q83 and 100–107 (VPTGVGKS). The Helicase ATP-binding domain maps to 87–291 (AKRVLKNKSF…LYRELLDFEI (205 aa)). Positions 203–206 (DDVD) match the DEAD box motif. Positions 310–525 (SKEKILEYIK…IDEVNLEELI (216 aa)) constitute a Helicase C-terminal domain. Residues 546–1613 (DLLKSVLMVV…ALHEEILSIR (1068 aa)) form a topoisomerase I region. Residues 550–712 (SVLMVVESPN…NIYRVGFNEI (163 aa)) enclose the Toprim domain. Mg(2+) is bound by residues E556 and D681. The 881-residue stretch at 733–1613 (DENKVKGQVV…ALHEEILSIR (881 aa)) folds into the Topo IA-type catalytic domain. The 130-residue stretch at 1070-1199 (FAGLVLGDGS…IGIYLNSIGI (130 aa)) folds into the DOD-type homing endonuclease domain. Y1363 (O-(5'-phospho-DNA)-tyrosine intermediate) is an active-site residue.

It in the N-terminal section; belongs to the DEAD box helicase family. DDVD subfamily. The protein in the C-terminal section; belongs to the type IA topoisomerase family. In terms of assembly, monomer. It depends on Zn(2+) as a cofactor. The cofactor is Mg(2+). Post-translationally, this protein undergoes a protein self splicing that involves a post-translational excision of the intervening region (intein) followed by peptide ligation.

It localises to the cytoplasm. It carries out the reaction ATP + H2O = ADP + phosphate + H(+). Modifies the topological state of DNA by introducing positive supercoils in an ATP-dependent process, increasing the linking number in steps of +1. Binds to single-stranded DNA, transiently cleaves and then rejoins the ends, introducing a positive supercoil in the process. The scissile phosphodiester is attacked by the catalytic tyrosine of the enzyme, resulting in the formation of a DNA-(5'-phosphotyrosyl)-enzyme intermediate. Probably involved in rewinding DNA strands in regions of the chromosome that have opened up to allow replication, transcription, DNA repair and/or for DNA protection. This chain is Reverse gyrase, found in Methanocaldococcus jannaschii (strain ATCC 43067 / DSM 2661 / JAL-1 / JCM 10045 / NBRC 100440) (Methanococcus jannaschii).